A 229-amino-acid polypeptide reads, in one-letter code: Large ribosomal subunit protein uL1 (229 aa).

Belongs to the universal ribosomal protein uL1 family. As to quaternary structure, part of the 50S ribosomal subunit.

In terms of biological role, binds directly to 23S rRNA. The L1 stalk is quite mobile in the ribosome, and is involved in E site tRNA release. Protein L1 is also a translational repressor protein, it controls the translation of the L11 operon by binding to its mRNA. This Pelagibacter ubique (strain HTCC1062) protein is Large ribosomal subunit protein uL1.